A 123-amino-acid polypeptide reads, in one-letter code: 1,4-dihydroxy-2-naphthoyl-CoA hydrolase (123 aa).

The active-site Nucleophile or proton acceptor is the E46.

This sequence belongs to the thioesterase PaaI family.

The enzyme catalyses 1,4-dihydroxy-2-naphthoyl-CoA + H2O = 1,4-dihydroxy-2-naphthoate + CoA + H(+). Its pathway is quinol/quinone metabolism; menaquinone biosynthesis. Catalyzes the hydrolysis of 1,4-dihydroxy-2-naphthoyl-CoA (DHNA-CoA) to 1,4-dihydroxy-2-naphthoate (DHNA) and free coenzyme A. Production of DHNA is required for protection against bacteriolysis in the cytosol of macrophages and tissue-specific virulence in vivo, suggesting that MenI is required to protect the bacteria from killing in the macrophage cytosol. This Listeria monocytogenes serotype 1/2a (strain 10403S) protein is 1,4-dihydroxy-2-naphthoyl-CoA hydrolase.